A 261-amino-acid chain; its full sequence is Global transcriptional regulator CodY (261 aa).

Residues 1 to 159 (MANLLSKTRR…SSTVVGIQLL (159 aa)) form a GAF domain region. Residues 207–226 (ASVIADRIGITRSVIVNALR) constitute a DNA-binding region (H-T-H motif).

It belongs to the CodY family.

It is found in the cytoplasm. Functionally, DNA-binding global transcriptional regulator which is involved in the adaptive response to starvation and acts by directly or indirectly controlling the expression of numerous genes in response to nutrient availability. During rapid exponential growth, CodY is highly active and represses genes whose products allow adaptation to nutrient depletion. The sequence is that of Global transcriptional regulator CodY from Streptococcus mutans serotype c (strain ATCC 700610 / UA159).